The chain runs to 362 residues: NAD(P)H-quinone oxidoreductase subunit 1, chloroplastic (362 aa).

8 consecutive transmembrane segments (helical) span residues 27–47 (IWIL…LVIV), 103–123 (IAVI…HFVL), 128–148 (IGVF…LMAG), 164–184 (AAQS…ISLL), 202–222 (FFGW…ISSL), 247–267 (YSGI…LVSS), 303–323 (VIGI…SITI), and 342–362 (FLLP…LVSL).

The protein belongs to the complex I subunit 1 family. NDH is composed of at least 16 different subunits, 5 of which are encoded in the nucleus.

The protein localises to the plastid. It localises to the chloroplast thylakoid membrane. The enzyme catalyses a plastoquinone + NADH + (n+1) H(+)(in) = a plastoquinol + NAD(+) + n H(+)(out). It carries out the reaction a plastoquinone + NADPH + (n+1) H(+)(in) = a plastoquinol + NADP(+) + n H(+)(out). Its function is as follows. NDH shuttles electrons from NAD(P)H:plastoquinone, via FMN and iron-sulfur (Fe-S) centers, to quinones in the photosynthetic chain and possibly in a chloroplast respiratory chain. The immediate electron acceptor for the enzyme in this species is believed to be plastoquinone. Couples the redox reaction to proton translocation, and thus conserves the redox energy in a proton gradient. The protein is NAD(P)H-quinone oxidoreductase subunit 1, chloroplastic of Saccharum hybrid (Sugarcane).